The chain runs to 325 residues: Alpha-cuprenene synthase COP6 (325 aa).

5 residues coordinate Mg(2+): D102, E166, N224, S228, and E232.

Belongs to the trichodiene synthase family. Requires Mg(2+) as cofactor.

Its function is as follows. Alpha-cuprenene synthase; part of the gene cluster that mediates the biosynthesis of alpha-cuprenene and oxidized derivatives. The alpha-cuprenene synthase COP6 is the only sesquiterpene synthase identified in C.cinereus that appears to be part of a biosynthetic gene cluster and is highly specific since it catalyzes the cyclization of (2E,6E)-farnesyl diphosphate into only one product, alpha-cuprenene. COP6 is also able to perform the cyclization of geranyl diphosphate. The cytochrome P450 monooxygenase COX2 then oxidizes the cyclohexadiene ring of alpha-cuprenene at positions 1 and 4, yielding first alpha-cuparene, followed by alpha-cuparophenol and a further yet unidentified compound resulting from one additional oxidation step. The cytochrome P450 monooxygenase COX1 then likely catalyzes the oxidation at position 9 of the pentane ring of alpha-cuprenene to give the corresponding hydroxy or ketone derivatives. The chain is Alpha-cuprenene synthase COP6 from Coprinopsis cinerea (strain Okayama-7 / 130 / ATCC MYA-4618 / FGSC 9003) (Inky cap fungus).